The following is a 131-amino-acid chain: Rhodopsin (131 aa).

Residues Cys-1–Ser-16 lie on the Extracellular side of the membrane. Asn-14 is a glycosylation site (N-linked (GlcNAc...) asparagine). The chain crosses the membrane as a helical span at residues Phe-17–Gly-38. Residues Asn-39 to Arg-66 are Cytoplasmic-facing. Residues Met-67–Tyr-88 form a helical membrane-spanning segment. The Extracellular portion of the chain corresponds to Ile-89–Val-100. The helical transmembrane segment at Phe-101–Leu-122 threads the bilayer. An N6-(retinylidene)lysine modification is found at Lys-110. Over Met-123–Met-131 the chain is Cytoplasmic.

Belongs to the G-protein coupled receptor 1 family. Opsin subfamily. Phosphorylated on some or all of the serine and threonine residues present in the C-terminal region. Post-translationally, contains one covalently linked retinal chromophore.

The protein localises to the membrane. It localises to the cell projection. The protein resides in the cilium. Its subcellular location is the photoreceptor outer segment. Its function is as follows. Photoreceptor required for image-forming vision at low light intensity. While most salt water fish species use retinal as chromophore, most freshwater fish use 3-dehydroretinal, or a mixture of retinal and 3-dehydroretinal. Light-induced isomerization of 11-cis to all-trans retinal triggers a conformational change that activates signaling via G-proteins. Subsequent receptor phosphorylation mediates displacement of the bound G-protein alpha subunit by arrestin and terminates signaling. This chain is Rhodopsin (rho), found in Coregonus autumnalis (Arctic cisco).